A 239-amino-acid chain; its full sequence is Putative antitoxin VapB45 (239 aa).

Functionally, possibly the antitoxin component of a type II toxin-antitoxin (TA) system. Its cognate toxin is VapC45. In Mycobacterium tuberculosis (strain ATCC 25618 / H37Rv), this protein is Putative antitoxin VapB45.